The sequence spans 252 residues: 5'-nucleotidase SurE (252 aa).

A divalent metal cation contacts are provided by Asp-8, Asp-9, Ser-42, and Asn-94.

Belongs to the SurE nucleotidase family. The cofactor is a divalent metal cation.

It localises to the cytoplasm. The catalysed reaction is a ribonucleoside 5'-phosphate + H2O = a ribonucleoside + phosphate. Functionally, nucleotidase that shows phosphatase activity on nucleoside 5'-monophosphates. The polypeptide is 5'-nucleotidase SurE (Ehrlichia ruminantium (strain Gardel)).